A 207-amino-acid chain; its full sequence is Ras-related protein Rab-8A (207 aa).

Residues serine 17, glycine 18, valine 19, glycine 20, lysine 21, threonine 22, cysteine 23, serine 35, serine 39, and threonine 40 each coordinate GTP. Threonine 22 contacts Mg(2+). Short sequence motifs (switch) lie at residues 31-45 (DAFN…GIDF) and 63-80 (DTAG…YYRG). Residues threonine 40 and aspartate 63 each coordinate Mg(2+). Glycine 66 contacts GTP. Phosphothreonine; by LRRK2 is present on threonine 72. Asparagine 121, lysine 122, aspartate 124, alanine 152, and lysine 153 together coordinate GTP. Residues serine 181 and serine 185 each carry the phosphoserine modification. Cysteine methyl ester is present on cysteine 204. Cysteine 204 is lipidated: S-geranylgeranyl cysteine. The propeptide at 205–207 (SLL) is removed in mature form.

The protein belongs to the small GTPase superfamily. Rab family. In terms of assembly, interacts (GTP-bound form) with MICALL1; regulates RAB8A association with recycling endosomes. Interacts with MICALL2; competes with RAB13 and is involved in E-cadherin endocytic recycling. Interacts (GTP-bound form) with MICAL1, MICALCL, MICAL3 and EHBP1L1; two molecules of RAB8A can bind to one molecule of the effector protein; ternary complexes of RAB8A, RAB13 and either MICAL1 or EHBP1L1 are possible. Interacts (GTP-bound form) with EHBP1. Interacts with EHD1. Interacts with MAP4K2 and SYTL4. Interacts with SGSM1 and SGSM3. Interacts with RABIF, RIMS2, RPH3A and RPH3A. Interacts with OPTN. Interacts with MYO5B. Interacts with CIMAP3. Interacts with BIRC6/bruce. Interacts with OCRL. Interacts with AHI1. Interacts with DCDC1. Interacts with LRRK2; interaction facilitates phosphorylation of Thr-72. Interacts with RAB31P, GDI1, GDI2, CHM, CHML, RABGGTA, RABGGTB, TBC1D15 and INPP5B; these interactions are dependent on Thr-72 not being phosphorylated. Interacts with RILPL1 and RILPL2; these interactions are dependent on the phosphorylation of Thr-72 by LRRK2. Interacts with DZIP1; prevents inhibition by the GDP-dissociation inhibitor GDI2. Interacts with RAB3IP/Rabin8, RAB3IP functions as guanine exchange factor (GEF) towards RAB8A. Interacts (in GDP-bound form) with RPGR, RPGR functions as GEF towards RAB8A. Mg(2+) is required as a cofactor. In terms of processing, phosphorylation of Thr-72 in the switch II region by LRRK2 prevents the association of RAB regulatory proteins, including CHM, CHML and RAB GDP dissociation inhibitors GDI1 and GDI2. Phosphorylation by LRRK2 is required for localization to stressed lysosomes.

Its subcellular location is the cell membrane. The protein resides in the golgi apparatus. It localises to the endosome membrane. The protein localises to the recycling endosome membrane. It is found in the cell projection. Its subcellular location is the cilium. The protein resides in the cytoplasmic vesicle. It localises to the phagosome membrane. The protein localises to the cytoplasm. It is found in the cytoskeleton. Its subcellular location is the microtubule organizing center. The protein resides in the centrosome. It localises to the centriole. The protein localises to the cilium basal body. It is found in the midbody. Its subcellular location is the lysosome. The enzyme catalyses GTP + H2O = GDP + phosphate + H(+). Regulated by guanine nucleotide exchange factors (GEFs) such as RAB3IP/Rabin8 and RPGR which promote the exchange of bound GDP for free GTP, GTPase activating proteins (GAPs) which increase the GTP hydrolysis activity, and GDP dissociation inhibitors (GDIs) which inhibit the dissociation of the nucleotide from the GTPase. Activated in response to insulin. Its function is as follows. The small GTPases Rab are key regulators of intracellular membrane trafficking, from the formation of transport vesicles to their fusion with membranes. Rabs cycle between an inactive GDP-bound form and an active GTP-bound form that is able to recruit to membranes different sets of downstream effectors directly responsible for vesicle formation, movement, tethering and fusion. RAB8A is involved in polarized vesicular trafficking and neurotransmitter release. Together with RAB11A, RAB3IP, the exocyst complex, PARD3, PRKCI, ANXA2, CDC42 and DNMBP promotes transcytosis of PODXL to the apical membrane initiation sites (AMIS), apical surface formation and lumenogenesis. Regulates the compacted morphology of the Golgi. Together with MYO5B and RAB11A participates in epithelial cell polarization. Also involved in membrane trafficking to the cilium and ciliogenesis. Together with MICALL2, may also regulate adherens junction assembly. May play a role in insulin-induced transport to the plasma membrane of the glucose transporter GLUT4 and therefore play a role in glucose homeostasis. Involved in autophagy. Participates in the export of a subset of neosynthesized proteins through a Rab8-Rab10-Rab11-dependent endososomal export route. Targeted to and stabilized on stressed lysosomes through LRRK2 phosphorylation. Suppresses stress-induced lysosomal enlargement through EHBP1 and EHNP1L1 effector proteins. This Mus musculus (Mouse) protein is Ras-related protein Rab-8A.